Here is a 359-residue protein sequence, read N- to C-terminus: DNA replication and repair protein RecF (359 aa).

30–37 (GQNAQGKT) is a binding site for ATP.

This sequence belongs to the RecF family.

The protein resides in the cytoplasm. Functionally, the RecF protein is involved in DNA metabolism; it is required for DNA replication and normal SOS inducibility. RecF binds preferentially to single-stranded, linear DNA. It also seems to bind ATP. The protein is DNA replication and repair protein RecF of Lactococcus lactis subsp. cremoris (strain MG1363).